A 155-amino-acid polypeptide reads, in one-letter code: Endoribonuclease YbeY (155 aa).

Residues H113, H117, and H123 each coordinate Zn(2+).

Belongs to the endoribonuclease YbeY family. It depends on Zn(2+) as a cofactor.

It is found in the cytoplasm. Single strand-specific metallo-endoribonuclease involved in late-stage 70S ribosome quality control and in maturation of the 3' terminus of the 16S rRNA. The protein is Endoribonuclease YbeY of Ureaplasma parvum serovar 3 (strain ATCC 27815 / 27 / NCTC 11736).